The chain runs to 164 residues: UPF0561 protein C2orf68 homolog (164 aa).

Basic and acidic residues-rich tracts occupy residues 1–13 (MEVIRDGEGESVK) and 35–49 (IARDDYDREVKQAKE). The disordered stretch occupies residues 1 to 98 (MEVIRDGEGE…WNESSSGTEM (98 aa)). A compositionally biased stretch (basic residues) spans 50–64 (KQRRRHTNTPRRPRR).

This sequence belongs to the UPF0561 family.

This chain is UPF0561 protein C2orf68 homolog, found in Danio rerio (Zebrafish).